The chain runs to 430 residues: Phosphoribosylamine--glycine ligase (430 aa).

Residues 109–314 form the ATP-grasp domain; that stretch reads RGLMNKYGID…FLTIAEHIIN (206 aa). 136-192 serves as a coordination point for ATP; the sequence is IREYPGDLAVKPTGLTGGKGVKVMGEQVDREGAVEYAMTLKDQVIILEERLLGEEFT. Residues glutamine 272, glutamate 284, and asparagine 286 each coordinate Mg(2+). Residues glutamine 272, glutamate 284, and asparagine 286 each contribute to the Mn(2+) site.

Belongs to the GARS family. It depends on Mg(2+) as a cofactor. Mn(2+) is required as a cofactor.

It catalyses the reaction 5-phospho-beta-D-ribosylamine + glycine + ATP = N(1)-(5-phospho-beta-D-ribosyl)glycinamide + ADP + phosphate + H(+). It functions in the pathway purine metabolism; IMP biosynthesis via de novo pathway; N(1)-(5-phospho-D-ribosyl)glycinamide from 5-phospho-alpha-D-ribose 1-diphosphate: step 2/2. The polypeptide is Phosphoribosylamine--glycine ligase (Methanocorpusculum labreanum (strain ATCC 43576 / DSM 4855 / Z)).